The following is a 511-amino-acid chain: Sodium/proline symporter 2 (511 aa).

13 helical membrane-spanning segments follow: residues 16-36 (WQTY…GYYG), 54-74 (IGPY…WMIM), 85-105 (LSAM…YFVV), 139-159 (IISG…GFVS), 175-195 (GLLM…YLAV), 204-224 (VIML…LNGI), 246-266 (VLGI…PHII), 286-306 (ISWM…GIAF), 327-347 (ILFH…AIMS), 381-401 (FLMV…WIAW), 410-430 (LVGN…IFSL), 438-458 (TGAL…IVWI), and 467-487 (LFGM…TYFV).

The protein belongs to the sodium:solute symporter (SSF) (TC 2.A.21) family.

It is found in the cell membrane. It carries out the reaction L-proline(in) + Na(+)(in) = L-proline(out) + Na(+)(out). Catalyzes the sodium-dependent uptake of extracellular L-proline. The chain is Sodium/proline symporter 2 (putP2) from Staphylococcus saprophyticus subsp. saprophyticus (strain ATCC 15305 / DSM 20229 / NCIMB 8711 / NCTC 7292 / S-41).